The chain runs to 910 residues: Constitutive coactivator of peroxisome proliferator-activated receptor gamma (910 aa).

3 disordered regions span residues 333–416, 443–483, and 863–910; these read SDAE…VPMC, SEPR…ESRQ, and SHHA…WRRY. Composition is skewed to basic and acidic residues over residues 335–351, 360–375, and 396–411; these read AESREEVPMCSDAESRQ, ESRREVPVYTDSEPRQ, and ESRREVPMCSDPEPRQ. Residues 872-890 show a composition bias toward polar residues; sequence QGSSYHRTGSGYSRSSQGQ. R885 is modified (omega-N-methylarginine). Basic and acidic residues predominate over residues 901–910; it reads QYEHDQWRRY.

Belongs to the constitutive coactivator of PPAR-gamma family. Interacts with ESR1 and RXRA. Interacts with PPARG; in a ligand-independent manner. Widely expressed.

It localises to the nucleus. Its function is as follows. Functions as a transactivator of PPARG and ESR1. Functions in adipogenesis through PPARG activation. The sequence is that of Constitutive coactivator of peroxisome proliferator-activated receptor gamma (FAM120B) from Homo sapiens (Human).